Consider the following 134-residue polypeptide: Inner membrane protein YqjE (134 aa).

The Cytoplasmic segment spans residues 1 to 55; it reads MADTHHAQGPGKSVLGIGQRIVSIMVEMVETRLRLAVVELEEEKANLFQLLLMLG. Residues 56–76 form a helical membrane-spanning segment; it reads LTMLFAAFGLMSLMVLIIWAV. At 77-83 the chain is on the periplasmic side; it reads DPQYRLN. A helical membrane pass occupies residues 84–104; the sequence is AMIATTVVLLLLALIGGIWTL. The Cytoplasmic segment spans residues 105–134; sequence RKSRKSTLLRHTRHELANDRQLLEEESREQ.

The protein localises to the cell inner membrane. The sequence is that of Inner membrane protein YqjE (yqjE) from Escherichia coli O157:H7.